The sequence spans 995 residues: Polynucleotide 5'-hydroxyl-kinase NOL9 (995 aa).

2 disordered regions span residues 18 to 173 (EQRE…SSMK) and 271 to 359 (IKVF…YEPP). Low complexity-rich tracts occupy residues 75-94 (TAGA…SSPS) and 110-129 (VNKS…KSAK). The span at 279–354 (EETDSDEDDI…DIFDTDDLDS (76 aa)) shows a compositional bias: acidic residues. 639–646 (GGKGVGKS) is an ATP binding site.

This sequence belongs to the Clp1 family. NOL9/GRC3 subfamily.

Its subcellular location is the nucleus. The protein localises to the nucleolus. In terms of biological role, polynucleotide 5'-kinase involved in rRNA processing. The chain is Polynucleotide 5'-hydroxyl-kinase NOL9 from Drosophila melanogaster (Fruit fly).